A 71-amino-acid chain; its full sequence is Protein translocase subunit SecE (71 aa).

The chain crosses the membrane as a helical span at residues 43–63 (VAGVGILAVGAIGFIIYVLLT).

The protein belongs to the SecE/SEC61-gamma family. Component of the Sec protein translocase complex. Heterotrimer consisting of SecY (alpha), SecG (beta) and SecE (gamma) subunits. The heterotrimers can form oligomers, although 1 heterotrimer is thought to be able to translocate proteins. Interacts with the ribosome. May interact with SecDF, and other proteins may be involved.

Its subcellular location is the cell membrane. Essential subunit of the Sec protein translocation channel SecYEG. Clamps together the 2 halves of SecY. May contact the channel plug during translocation. The sequence is that of Protein translocase subunit SecE from Methanosarcina barkeri (strain Fusaro / DSM 804).